Here is a 722-residue protein sequence, read N- to C-terminus: Putative tyrosine-protein kinase in cps region (722 aa).

The next 2 helical transmembrane spans lie at Ile-31–Ile-53 and Ile-427–Leu-449.

The protein belongs to the etk/wzc family. Autophosphorylated on tyrosine residue(s).

Its subcellular location is the cell inner membrane. It carries out the reaction L-tyrosyl-[protein] + ATP = O-phospho-L-tyrosyl-[protein] + ADP + H(+). It functions in the pathway glycan metabolism; exopolysaccharide biosynthesis. The polypeptide is Putative tyrosine-protein kinase in cps region (Klebsiella pneumoniae).